We begin with the raw amino-acid sequence, 178 residues long: CASP-like protein 4D1 (178 aa).

Over 1 to 14 (MAPPPPSPPSVTLR) the chain is Cytoplasmic. The chain crosses the membrane as a helical span at residues 15–35 (TVLLLLRVLTAAFLVITVVLI). Topologically, residues 36-60 (STNTVTLEVSSTSIKMRFNDVYAYR) are extracellular. A helical transmembrane segment spans residues 61 to 81 (YMLSAAVIGLLYAVVQLFLTI). Residues 82–149 (SQFATGTTHP…KFFSKGYASA (68 aa)) lie on the Cytoplasmic side of the membrane. A helical transmembrane segment spans residues 150–170 (SLLLFAFVSLAVLSVFSSLAL). Residues 171–178 (SKRPIQVS) are Extracellular-facing.

It belongs to the Casparian strip membrane proteins (CASP) family. In terms of assembly, homodimer and heterodimers.

It localises to the cell membrane. The chain is CASP-like protein 4D1 from Arabidopsis lyrata subsp. lyrata (Lyre-leaved rock-cress).